The following is a 179-amino-acid chain: Replication restart protein DnaT (179 aa).

Residues 156–179 (GGLPKRDVNTVSEPDSQIPPGFRG) form a disordered region.

This sequence belongs to the DnaT family. As to quaternary structure, homooligomerizes. Interacts with PriB. Component of the replication restart primosome. Primosome assembly occurs via a 'hand-off' mechanism. PriA binds to replication forks, subsequently PriB then DnaT bind; DnaT then displaces ssDNA to generate the helicase loading substrate.

Its function is as follows. Involved in the restart of stalled replication forks, which reloads the replicative helicase on sites other than the origin of replication. Can function in multiple replication restart pathways. Displaces ssDNA from a PriB-ssDNA complex. Probably forms a spiral filament on ssDNA. The chain is Replication restart protein DnaT from Shigella dysenteriae serotype 1 (strain Sd197).